Consider the following 198-residue polypeptide: Protein ORFi in retron Ec67 (198 aa).

The protein belongs to the CI repressor protein family.

This Escherichia coli protein is Protein ORFi in retron Ec67.